Consider the following 237-residue polypeptide: Tetraspanin-8 (237 aa).

Over 1–9 (MAGVSACIK) the chain is Cytoplasmic. The chain crosses the membrane as a helical span at residues 10–33 (YSMFTFNFLFWLCGILILALAIWV). At 34–57 (RVSNDSQAIFGSEDVGSSSYVAVD) the chain is on the extracellular side. The chain crosses the membrane as a helical span at residues 58-72 (ILIAVGAIIMILGFL). At 73–83 (GCCGAIKESRC) the chain is on the cytoplasmic side. Residues 84–109 (MLLLFFIGLLLILLLQVATGILGAVF) form a helical membrane-spanning segment. The Extracellular portion of the chain corresponds to 110–205 (KSKSDRIVNE…SFIKDFLAKN (96 aa)). N-linked (GlcNAc...) asparagine glycosylation occurs at N118. The helical transmembrane segment at 206–230 (LIIVIGISFGLAVIEILGLVFSMVL) threads the bilayer. The Cytoplasmic segment spans residues 231-237 (YCQIGNK).

Belongs to the tetraspanin (TM4SF) family. In terms of assembly, forms homooligomers. Interacts with MEP1B. Interacts with integrin alpha3/ITGA3. Interacts with RICTOR and MTOR. Interacts with ADAM17. Interacts with ECE1. In terms of tissue distribution, gastric, colon, rectal, and pancreatic carcinomas.

The protein resides in the cell membrane. Its function is as follows. Structural component of specialized membrane microdomains known as tetraspanin-enriched microdomains (TERMs), which act as platforms for receptor clustering and signaling. Participates thereby in diverse biological functions such as cell signal transduction, migration and protein trafficking. Promotes ADAM17-mediated TNF-alpha processing through recruitment of ADAM17 to tetraspanin-enriched micro-domains (TEMs). Forms a complex with RICTOR and integrin alpha3/ITGA3 to mediate mTORC2 activation and AKT1 phosphorylation leading to cell migration. Reduces apoptosis and autophagy induced by high glucose levels through forming a complex with mTOR and RICTOR. Contributes to the maintenance of intestinal epithelial barrier and plays a role in the regulation of intestine inflammation by switching interferon gamma receptor 1/IFNGR1 from clathrin-dependent to lipid raft-dependent endocytosis route to limit STAT1 activation magnitude and duration. Acts as a modulator of the endothelin axis by associating with endothelin converting enzyme ECE1 and regulating its activity of conversion of the endothelin-1 precursor to endothelin. This Homo sapiens (Human) protein is Tetraspanin-8 (TSPAN8).